A 356-amino-acid polypeptide reads, in one-letter code: Probable neutral protease 2 homolog ARB_04769 (356 aa).

The first 17 residues, 1 to 17 (MQFTALLAALGAPLALA), serve as a signal peptide directing secretion. Residues 18–183 (ASIPAAAHNH…DDSTGVIDKR (166 aa)) constitute a propeptide that is removed on maturation. 2 disulfides stabilise this stretch: C191/C262 and C269/C287. Residue N205 is glycosylated (N-linked (GlcNAc...) asparagine). H311 lines the Zn(2+) pocket. Residue E312 is part of the active site. Zn(2+) contacts are provided by H315 and D326.

This sequence belongs to the peptidase M35 family. Requires Zn(2+) as cofactor.

It localises to the secreted. It catalyses the reaction Preferential cleavage of bonds with hydrophobic residues in P1'. Also 3-Asn-|-Gln-4 and 8-Gly-|-Ser-9 bonds in insulin B chain.. Functionally, probable secreted metalloprotease that shows high activities on basic nuclear substrates such as histone and protamine. May be involved in virulence. The polypeptide is Probable neutral protease 2 homolog ARB_04769 (Arthroderma benhamiae (strain ATCC MYA-4681 / CBS 112371) (Trichophyton mentagrophytes)).